A 51-amino-acid chain; its full sequence is NEKSGSCPDMSMPIPPLGICKTLCNSDSGCPNVQKCCKNGCGFMTCTTPVP.

The WAP domain occupies 1 to 50 (NEKSGSCPDMSMPIPPLGICKTLCNSDSGCPNVQKCCKNGCGFMTCTTPV). Cystine bridges form between Cys-7/Cys-37, Cys-20/Cys-41, Cys-24/Cys-36, and Cys-30/Cys-46.

In terms of tissue distribution, expressed by the venom gland.

It is found in the secreted. In terms of biological role, damages membranes of susceptible bacteria. Has no hemolytic activity. Not toxic to mice. Does not inhibit the proteinases elastase and cathepsin G. This chain is Nawaprin, found in Naja nigricollis (Black-necked spitting cobra).